A 3183-amino-acid chain; its full sequence is WD repeat- and FYVE domain-containing protein 4 (3183 aa).

A compositionally biased stretch (basic and acidic residues) spans 1–15 (MEAEDLSKTEDRPED). 4 disordered regions span residues 1–37 (MEAE…EGQS), 790–811 (AGQE…GKFK), 938–977 (KSLH…QALR), and 1828–1852 (KETT…HAAE). Residues 1832-1852 (SESSRNTSSPGASAEASHAAE) show a composition bias toward low complexity. In terms of domain architecture, BEACH-type PH spans 2383-2508 (LDGEKVSQKV…DRSKALKSFS (126 aa)). Residues 2525–2819 (NLRKHPGFDR…QIFTKPHPSR (295 aa)) enclose the BEACH domain. Residues 2812–2836 (FTKPHPSRNTTGKNPGPGKDASTPV) form a disordered region. WD repeat units lie at residues 2930 to 2969 (LAAW…GRPR), 2979 to 3018 (GHTQ…RVAC), 3021 to 3060 (VHRE…ASIT), 3070 to 3108 (TCCC…MPVP), and 3150 to 3183 (KASP…SADG).

Interacts with HSP90AB1. In terms of tissue distribution, highly expressed in immune tissues, especially B lymphocytes.

Its subcellular location is the early endosome. The protein localises to the endoplasmic reticulum. In terms of biological role, plays a critical role in the regulation of cDC1-mediated cross-presentation of viral and tumor antigens in dendritic cells. Mechanistically, acts near the plasma membrane and interacts with endosomal membranes to promote endosomal-to-cytosol antigen trafficking. Also plays a role in B-cell survival through regulation of autophagy. The polypeptide is WD repeat- and FYVE domain-containing protein 4 (Mus musculus (Mouse)).